A 34-amino-acid polypeptide reads, in one-letter code: Beta/mu-theraphotoxin-Pe1b (34 aa).

3 disulfide bridges follow: Cys-2/Cys-16, Cys-9/Cys-21, and Cys-15/Cys-28.

The protein belongs to the neurotoxin 10 (Hwtx-1) family. 54 (ProTx-1) subfamily. As to expression, expressed by the venom gland.

It localises to the secreted. Its function is as follows. Ion channel impairing toxin that inhibits several voltage-gated sodium channels. It acts by inhibiting the inward component of the sodium current and by shifting the voltage dependence of channel activation to more depolarized potentials. Its most potent activity is on Nav1.7/SCN9A (IC(50)=167 nM), followed by Nav1.6/SCN8A (IC(50)=696 nM), and Nav1.2/SCN2A (IC(50)=3.54 uM). In Phormingochilus everetti (Malaysian purple earth tiger tarantula), this protein is Beta/mu-theraphotoxin-Pe1b.